Here is an 85-residue protein sequence, read N- to C-terminus: Acyl carrier protein (85 aa).

The Carrier domain occupies 2–78 (SQISERVIDL…DAIAYIESHA (77 aa)). Residue Ser-37 is modified to O-(pantetheine 4'-phosphoryl)serine.

The protein belongs to the acyl carrier protein (ACP) family. In terms of processing, 4'-phosphopantetheine is transferred from CoA to a specific serine of apo-ACP by AcpS. This modification is essential for activity because fatty acids are bound in thioester linkage to the sulfhydryl of the prosthetic group.

The protein resides in the cytoplasm. Its pathway is lipid metabolism; fatty acid biosynthesis. Carrier of the growing fatty acid chain in fatty acid biosynthesis. This Azobacteroides pseudotrichonymphae genomovar. CFP2 protein is Acyl carrier protein.